A 377-amino-acid polypeptide reads, in one-letter code: PqqA peptide cyclase (377 aa).

The region spanning 12-228 is the Radical SAM core domain; sequence FGIPLAVLLE…EAARERLKGQ (217 aa). Residues Cys26, Cys30, and Cys33 each contribute to the [4Fe-4S] cluster site.

It belongs to the radical SAM superfamily. PqqE family. In terms of assembly, interacts with PqqD. The interaction is necessary for activity of PqqE. [4Fe-4S] cluster serves as cofactor.

It carries out the reaction [PQQ precursor protein] + S-adenosyl-L-methionine = E-Y cross-linked-[PQQ precursor protein] + 5'-deoxyadenosine + L-methionine + H(+). The protein operates within cofactor biosynthesis; pyrroloquinoline quinone biosynthesis. Its function is as follows. Catalyzes the cross-linking of a glutamate residue and a tyrosine residue in the PqqA protein as part of the biosynthesis of pyrroloquinoline quinone (PQQ). The sequence is that of PqqA peptide cyclase from Rhodopseudomonas palustris (strain ATCC BAA-98 / CGA009).